Here is a 681-residue protein sequence, read N- to C-terminus: DNA ligase (681 aa).

NAD(+) is bound by residues aspartate 35–aspartate 39, serine 84–isoleucine 85, and glutamate 121. Residue lysine 123 is the N6-AMP-lysine intermediate of the active site. Residues arginine 144, glutamate 180, lysine 300, and lysine 324 each contribute to the NAD(+) site. Zn(2+)-binding residues include cysteine 418, cysteine 421, cysteine 436, and cysteine 442. The BRCT domain occupies alanine 601–alanine 681.

The protein belongs to the NAD-dependent DNA ligase family. LigA subfamily. It depends on Mg(2+) as a cofactor. Mn(2+) is required as a cofactor.

The enzyme catalyses NAD(+) + (deoxyribonucleotide)n-3'-hydroxyl + 5'-phospho-(deoxyribonucleotide)m = (deoxyribonucleotide)n+m + AMP + beta-nicotinamide D-nucleotide.. DNA ligase that catalyzes the formation of phosphodiester linkages between 5'-phosphoryl and 3'-hydroxyl groups in double-stranded DNA using NAD as a coenzyme and as the energy source for the reaction. It is essential for DNA replication and repair of damaged DNA. This chain is DNA ligase, found in Aromatoleum aromaticum (strain DSM 19018 / LMG 30748 / EbN1) (Azoarcus sp. (strain EbN1)).